An 838-amino-acid chain; its full sequence is Leucine--tRNA ligase (838 aa).

The 'HIGH' region motif lies at 38-48; it reads PYPSGKAHVGH. A 'KMSKS' region motif is present at residues 608 to 612; it reads KMSKS. Lys611 is an ATP binding site.

This sequence belongs to the class-I aminoacyl-tRNA synthetase family.

The protein localises to the cytoplasm. The catalysed reaction is tRNA(Leu) + L-leucine + ATP = L-leucyl-tRNA(Leu) + AMP + diphosphate. The sequence is that of Leucine--tRNA ligase from Orientia tsutsugamushi (strain Boryong) (Rickettsia tsutsugamushi).